The primary structure comprises 405 residues: L-rhamnonate dehydratase (405 aa).

Substrate is bound by residues His33 and Arg59. Mg(2+)-binding residues include Asp226, Glu252, and Glu280. His329 functions as the Proton acceptor in the catalytic mechanism. Glu349 is a substrate binding site.

The protein belongs to the mandelate racemase/muconate lactonizing enzyme family. RhamD subfamily. As to quaternary structure, homooctamer; tetramer of dimers. It depends on Mg(2+) as a cofactor.

It catalyses the reaction L-rhamnonate = 2-dehydro-3-deoxy-L-rhamnonate + H2O. Its function is as follows. Catalyzes the dehydration of L-rhamnonate to 2-keto-3-deoxy-L-rhamnonate (KDR). This is L-rhamnonate dehydratase from Escherichia coli O6:H1 (strain CFT073 / ATCC 700928 / UPEC).